We begin with the raw amino-acid sequence, 188 residues long: Protein GrpE (188 aa).

Residues M1 to Q16 show a composition bias toward basic and acidic residues. The tract at residues M1 to E31 is disordered.

It belongs to the GrpE family. As to quaternary structure, homodimer.

The protein resides in the cytoplasm. Participates actively in the response to hyperosmotic and heat shock by preventing the aggregation of stress-denatured proteins, in association with DnaK and GrpE. It is the nucleotide exchange factor for DnaK and may function as a thermosensor. Unfolded proteins bind initially to DnaJ; upon interaction with the DnaJ-bound protein, DnaK hydrolyzes its bound ATP, resulting in the formation of a stable complex. GrpE releases ADP from DnaK; ATP binding to DnaK triggers the release of the substrate protein, thus completing the reaction cycle. Several rounds of ATP-dependent interactions between DnaJ, DnaK and GrpE are required for fully efficient folding. In Bacillus cereus (strain G9842), this protein is Protein GrpE.